The following is a 397-amino-acid chain: Tryptophan synthase beta chain 1 (397 aa).

An N6-(pyridoxal phosphate)lysine modification is found at Lys-90.

Belongs to the TrpB family. In terms of assembly, tetramer of two alpha and two beta chains. The cofactor is pyridoxal 5'-phosphate.

It carries out the reaction (1S,2R)-1-C-(indol-3-yl)glycerol 3-phosphate + L-serine = D-glyceraldehyde 3-phosphate + L-tryptophan + H2O. The protein operates within amino-acid biosynthesis; L-tryptophan biosynthesis; L-tryptophan from chorismate: step 5/5. Functionally, the beta subunit is responsible for the synthesis of L-tryptophan from indole and L-serine. This Aquifex aeolicus (strain VF5) protein is Tryptophan synthase beta chain 1 (trpB1).